Consider the following 190-residue polypeptide: Heme-binding protein 1 (190 aa).

It belongs to the HEBP family. As to quaternary structure, monomer.

Its subcellular location is the cytoplasm. Its function is as follows. May bind free porphyrinogens that may be present in the cell and thus facilitate removal of these potentially toxic compound. Binds with a high affinity to one molecule of heme or porphyrins. It binds metalloporphyrins, free porphyrins and N-methylprotoporphyrin with similar affinities. The sequence is that of Heme-binding protein 1 (hebp1) from Xenopus tropicalis (Western clawed frog).